A 94-amino-acid chain; its full sequence is Large ribosomal subunit protein uL23 (94 aa).

It belongs to the universal ribosomal protein uL23 family. Part of the 50S ribosomal subunit. Contacts protein L29, and trigger factor when it is bound to the ribosome.

Its function is as follows. One of the early assembly proteins it binds 23S rRNA. One of the proteins that surrounds the polypeptide exit tunnel on the outside of the ribosome. Forms the main docking site for trigger factor binding to the ribosome. This Phytoplasma australiense protein is Large ribosomal subunit protein uL23.